The chain runs to 426 residues: Anaerobic glycerol-3-phosphate dehydrogenase subunit C (426 aa).

4Fe-4S ferredoxin-type domains follow at residues 21–53 (SYKY…LYPG) and 67–99 (KSAE…GDLI). [4Fe-4S] cluster is bound by residues cysteine 32, cysteine 35, cysteine 38, cysteine 42, cysteine 79, cysteine 82, cysteine 85, and cysteine 89.

In terms of assembly, composed of a catalytic GlpA/B dimer and of GlpC.

Its subcellular location is the cell inner membrane. Its pathway is polyol metabolism; glycerol degradation via glycerol kinase pathway; glycerone phosphate from sn-glycerol 3-phosphate (anaerobic route): step 1/1. In terms of biological role, electron transfer protein; may also function as the membrane anchor for the GlpAB dimer. This chain is Anaerobic glycerol-3-phosphate dehydrogenase subunit C (glpC), found in Haemophilus influenzae (strain ATCC 51907 / DSM 11121 / KW20 / Rd).